Reading from the N-terminus, the 183-residue chain is Probable RNA 2'-phosphotransferase (183 aa).

This sequence belongs to the KptA/TPT1 family.

In terms of biological role, removes the 2'-phosphate from RNA via an intermediate in which the phosphate is ADP-ribosylated by NAD followed by a presumed transesterification to release the RNA and generate ADP-ribose 1''-2''-cyclic phosphate (APPR&gt;P). May function as an ADP-ribosylase. The polypeptide is Probable RNA 2'-phosphotransferase (Pyrococcus furiosus (strain ATCC 43587 / DSM 3638 / JCM 8422 / Vc1)).